The chain runs to 157 residues: Transcription elongation factor GreA (157 aa).

Belongs to the GreA/GreB family.

Its function is as follows. Necessary for efficient RNA polymerase transcription elongation past template-encoded arresting sites. The arresting sites in DNA have the property of trapping a certain fraction of elongating RNA polymerases that pass through, resulting in locked ternary complexes. Cleavage of the nascent transcript by cleavage factors such as GreA or GreB allows the resumption of elongation from the new 3'terminus. GreA releases sequences of 2 to 3 nucleotides. In Brucella abortus (strain S19), this protein is Transcription elongation factor GreA.